Here is a 371-residue protein sequence, read N- to C-terminus: Cytochrome b (371 aa).

4 helical membrane-spanning segments follow: residues 25–45, 69–90, 105–125, and 170–190; these read FGSMLLTCSMIQVLTGFFLAV, WMVQNLHAIGASMFFICIYIHI, WLSGTTLLIMLMATAFFGYVL, and FFALHFILPFGIISLSSLHVL. Heme b-binding residues include His75 and His89. Heme b-binding residues include His174 and His188. His193 serves as a coordination point for a ubiquinone. The next 4 helical transmembrane spans lie at 218–238, 280–300, 312–332, and 339–358; these read MKDLLMLTTTLTLLLMTISFF, LGGALALAMSIMILFTVPFIH, LMQLMFWTFTSTFVLITWAAT, and FISISQVASIIYFTFFISNP.

The protein belongs to the cytochrome b family. In terms of assembly, the cytochrome bc1 complex contains 3 respiratory subunits (MT-CYB, CYC1 and UQCRFS1), 2 core proteins (UQCRC1 and UQCRC2) and probably 6 low-molecular weight proteins. It depends on heme b as a cofactor.

It localises to the mitochondrion inner membrane. Its function is as follows. Component of the ubiquinol-cytochrome c reductase complex (complex III or cytochrome b-c1 complex) that is part of the mitochondrial respiratory chain. The b-c1 complex mediates electron transfer from ubiquinol to cytochrome c. Contributes to the generation of a proton gradient across the mitochondrial membrane that is then used for ATP synthesis. The sequence is that of Cytochrome b (MT-CYB) from Boa constrictor (Boa).